A 1106-amino-acid polypeptide reads, in one-letter code: MGFNEFLSSIFGNKSTRDMKEIKPWVEKIKAAYPEIEALDNDALRAKTEELKKYIRESATDERAKVEELKASIESTELEDREEVFAQIDKIEKEILEKYEKALEEVLPVAFSIVKATAKRFTENEEIVVTATEFDRHLAATKDFVRIEGDKAIYQNHWNAGGNDTVWNMIHYDVQLFGGVVLHKGKIAEMATGEGKTLVATLPVFLNALTGNGVHVVTVNDYLAKRDSEWMGPLYMFHGLSVDCIDRHQPNSDARRQAYLADITFGTNNEFGFDYLRDNMAISPKDLVQRQHNYAIVDEVDSVLIDDARTPLIISGPVPKGDDQLFEQLRPLVERLVEAQKALATKYLSEAKRLIASNDKKEVEEGFLALYRSHKCLPKNKALIKFLSEQGIKAGMLKTEEIYMEQNNKRMHEVTEPLYFVIEEKLNSVDLTDKGIDLITGNSEDPTLFVLPDIAAQLSELENQNLTNEQLLEKKDELLTNYAIKSERVHTINQLLKAYTMFEKDDEYVVIDGQVKIVDEQTGRIMEGRRYSDGLHQAIEAKERVKVEAATQTFATITLQNYFRMYHKLSGMTGTAETEAGELWDIYKLDVVVIPTNRPIARKDMNDRVYKTKREKYKAVIEEIEKLVQAGRPVLVGTTSVEISEMLSKMLTMRKIEHSVLNAKLHQKEAEIVAKAGFSCAVTIATNMAGRGTDIKLSPEVKAAGGLAIIGTERHESRRVDRQLRGRAGRQGDPGSSVFFVSLEDDLMRLFSSDRIASVMDKLGFQEGEMIEHKMISNSIERAQKKVEENNFGIRKRLLEYDDVMNKQRTVVYTKRRHALMGERIGMDIVNMIWDRCANAIENNDYEGCQMELLQTLAMETPFTEEEFRNEKKDTLAEKTFNIAMENFKRKTERLAQIANPVIKQVYENQGHMYENILIPITDGKRMYNISCNLKAAYESESKEVVKAFEKSILLHVIDEAWKENLRELDELKHSVQNASYEQKDPLLIYKLESVTLFDAMVNKINNQTISILMRGQIPVQEAPADEQQPRRVEVRQAAPEQRQDMSKYREQKQDLSDPNQQAAASQDTREQQKREPIRAEKTVGRNDPCPCGSGKKYKNCHGQNA.

ATP-binding positions include glutamine 175, 193–197, and aspartate 694; that span reads GEGKT. Positions 1021–1106 are disordered; sequence QEAPADEQQP…KYKNCHGQNA (86 aa). A compositionally biased stretch (basic and acidic residues) spans 1042 to 1056; sequence QRQDMSKYREQKQDL. The segment covering 1057–1067 has biased composition (polar residues); that stretch reads SDPNQQAAASQ. The segment covering 1068 to 1085 has biased composition (basic and acidic residues); that stretch reads DTREQQKREPIRAEKTVG. Positions 1090, 1092, 1101, and 1102 each coordinate Zn(2+).

The protein belongs to the SecA family. As to quaternary structure, monomer and homodimer. Part of the essential Sec protein translocation apparatus which comprises SecA, SecYEG and auxiliary proteins SecDF. Other proteins may also be involved. Zn(2+) is required as a cofactor.

Its subcellular location is the cell inner membrane. It localises to the cytoplasm. It catalyses the reaction ATP + H2O + cellular proteinSide 1 = ADP + phosphate + cellular proteinSide 2.. In terms of biological role, part of the Sec protein translocase complex. Interacts with the SecYEG preprotein conducting channel. Has a central role in coupling the hydrolysis of ATP to the transfer of proteins into and across the cell membrane, serving as an ATP-driven molecular motor driving the stepwise translocation of polypeptide chains across the membrane. The polypeptide is Protein translocase subunit SecA (Bacteroides thetaiotaomicron (strain ATCC 29148 / DSM 2079 / JCM 5827 / CCUG 10774 / NCTC 10582 / VPI-5482 / E50)).